Here is a 347-residue protein sequence, read N- to C-terminus: MLYPLIRKFFFSLDAETAHGIGMKGIDLMNAAGLACAVAKPVAACPVEVMGLKFPNPVGLAAGLDKNGDHIDGLAKLGFGFIEIGTITPRPQDGNPKPRLFRIPEAQGIINRMGFNNAGVDKLLENVRAAEFPKKGGILGINIGKNATTPIEKAADDYLICLDKVYNDASYVTVNISSPNTKNLRELQKDEALDDLLAQLKAKQLQLAEQYGKYVPMALKIAPDLDDEQITAIADALRRHRFDAVIATNTTLSREGVEGMPNATETGGLSGKPVFEKSTAVQKKLSIALAGELPIIGVGGIMGGEDAAEKIRAGASLVQFYSGFIYRGPDLVSEVAETLAHVMRKSV.

Residues 62-66 (AGLDK) and Thr86 each bind FMN. Lys66 provides a ligand contact to substrate. 111–115 (NRMGF) is a binding site for substrate. FMN-binding residues include Asn142 and Asn175. Asn175 lines the substrate pocket. The Nucleophile role is filled by Ser178. Asn180 contacts substrate. Residues Lys220 and Thr248 each contribute to the FMN site. Residue 249–250 (NT) coordinates substrate. FMN contacts are provided by residues Gly271, Gly300, and 321 to 322 (YS).

The protein belongs to the dihydroorotate dehydrogenase family. Type 2 subfamily. As to quaternary structure, monomer. The cofactor is FMN.

It is found in the cell membrane. It catalyses the reaction (S)-dihydroorotate + a quinone = orotate + a quinol. The protein operates within pyrimidine metabolism; UMP biosynthesis via de novo pathway; orotate from (S)-dihydroorotate (quinone route): step 1/1. Functionally, catalyzes the conversion of dihydroorotate to orotate with quinone as electron acceptor. This Dechloromonas aromatica (strain RCB) protein is Dihydroorotate dehydrogenase (quinone).